We begin with the raw amino-acid sequence, 404 residues long: Cysteine desulfurase IscS (404 aa).

Pyridoxal 5'-phosphate-binding positions include A75–T76, N155, Q183, and S203–H205. Residue K206 is modified to N6-(pyridoxal phosphate)lysine. T243 contributes to the pyridoxal 5'-phosphate binding site. The active-site Cysteine persulfide intermediate is C328. C328 contributes to the [2Fe-2S] cluster binding site.

Belongs to the class-V pyridoxal-phosphate-dependent aminotransferase family. NifS/IscS subfamily. Homodimer. Forms a heterotetramer with IscU, interacts with other sulfur acceptors. The cofactor is pyridoxal 5'-phosphate.

The protein resides in the cytoplasm. It carries out the reaction (sulfur carrier)-H + L-cysteine = (sulfur carrier)-SH + L-alanine. The protein operates within cofactor biosynthesis; iron-sulfur cluster biosynthesis. Master enzyme that delivers sulfur to a number of partners involved in Fe-S cluster assembly, tRNA modification or cofactor biosynthesis. Catalyzes the removal of elemental sulfur atoms from cysteine to produce alanine. Functions as a sulfur delivery protein for Fe-S cluster synthesis onto IscU, an Fe-S scaffold assembly protein, as well as other S acceptor proteins. The chain is Cysteine desulfurase IscS from Neisseria meningitidis serogroup C / serotype 2a (strain ATCC 700532 / DSM 15464 / FAM18).